Here is a 3432-residue protein sequence, read N- to C-terminus: Genome polyprotein (3432 aa).

The segment at 2–15 (TKKPGGPGKNRAIN) is interaction with host EXOC1. The Cytoplasmic segment spans residues 2 to 109 (TKKPGGPGKN…RKQNKRGGNE (108 aa)). Residues 37-72 (LLDGRGPVRFVLALITFFKFTALAPTKALLGRWKAV) form a hydrophobic; homodimerization of capsid protein C region. Residues 106–127 (GGNEGSIMWLASLAVVIACAGA) constitute a propeptide, ER anchor for the capsid protein C, removed in mature form by serine protease NS3. A helical transmembrane segment spans residues 110–130 (GSIMWLASLAVVIACAGAMKL). The Extracellular segment spans residues 131 to 253 (SNFQGKLLMT…ATRYLMKTEN (123 aa)). Asn-142 carries N-linked (GlcNAc...) asparagine; by host glycosylation. A helical membrane pass occupies residues 254–274 (WIIRNPGYAFLAAVLGWMLGS). Residues 275 to 279 (NNGQR) are Cytoplasmic-facing. The chain crosses the membrane as a helical span at residues 280–294 (VVFTILLLLVAPAYS). Topologically, residues 295–746 (FNCLGMGNRD…QVFGGAFRTL (452 aa)) are extracellular. Disulfide bonds link Cys-297–Cys-324, Cys-354–Cys-410, Cys-354–Cys-415, Cys-368–Cys-399, Cys-386–Cys-410, and Cys-386–Cys-415. Residues 392–405 (DRGWGNGCGLFGKG) are fusion peptide. The N-linked (GlcNAc...) asparagine; by host glycan is linked to Asn-448. Disulfide bonds link Cys-484–Cys-581 and Cys-598–Cys-629. The helical transmembrane segment at 747-767 (FGGMSWITQGLMGALLLWMGV) threads the bilayer. The Cytoplasmic segment spans residues 768 to 773 (NARDRS). A helical membrane pass occupies residues 774–794 (IALAFLATGGVLVFLATNVHA). Residues 795-1219 (DTGCAIDITR…AFAEANSGGD (425 aa)) are Extracellular-facing. Cystine bridges form between Cys-798-Cys-809, Cys-849-Cys-937, Cys-973-Cys-1017, Cys-1074-Cys-1123, Cys-1085-Cys-1106, and Cys-1107-Cys-1110. Asn-924 and Asn-1001 each carry an N-linked (GlcNAc...) asparagine; by host glycan. The chain crosses the membrane as a helical span at residues 1220-1240 (VLHLALIAVFKIQPAFLVMNM). The Cytoplasmic portion of the chain corresponds to 1241–1250 (LSTRWTNQEN). A helical membrane pass occupies residues 1251 to 1271 (VVLVLGAAFFQLASVDLQIGV). A topological domain (lumenal) is located at residue His-1272. Residues 1273-1293 (GILNAAAIAWMIVRAITFPTT) form a helical membrane-spanning segment. The Cytoplasmic segment spans residues 1294–1309 (SSVTMPVLALLTPGMR). Residues 1310-1330 (ALYLDTYRIILLVIGICSLLH) form a helical membrane-spanning segment. Topologically, residues 1331 to 1341 (ERKKTMAKKKG) are lumenal. Residues 1342 to 1362 (AVLLGLALTSTGWFSPTTIAA) form a helical membrane-spanning segment. Topologically, residues 1363–1374 (GLMVCNPNKKRG) are cytoplasmic. A helical transmembrane segment spans residues 1375 to 1395 (WPATEFLSAVGLMFAIVGGLA). Topologically, residues 1396–1398 (ELD) are lumenal. A helical transmembrane segment spans residues 1399-1419 (IESMSIPFMLAGLMAVSYVVS). The Cytoplasmic portion of the chain corresponds to 1420-1476 (GKATDMWLERAADISWEMDAAITGSSRRLDVKLDDDGDFHLIDDPGVPWKVWVLRMS). Residues 1427–1466 (LERAADISWEMDAAITGSSRRLDVKLDDDGDFHLIDDPGV) are interacts with and activates NS3 protease. The helical intramembrane region spans 1477 to 1497 (CIGLAALTPWAIVPAAFGYWL). The Cytoplasmic portion of the chain corresponds to 1498–2173 (TLKTTKRGGV…RMALEELPDA (676 aa)). The 178-residue stretch at 1505 to 1682 (GGVFWDTPSP…DRQEEPVPEA (178 aa)) folds into the Peptidase S7 domain. Catalysis depends on charge relay system; for serine protease NS3 activity residues His-1555, Asp-1579, and Ser-1639. Positions 1685–1841 (PNMLRKRQMT…DSNAPIHDLQ (157 aa)) constitute a Helicase ATP-binding domain. The interval 1689-1692 (RKRQ) is important for RNA-binding. An ATP-binding site is contributed by 1698-1705 (LHPGSGKT). The DEAH box signature appears at 1789–1792 (DEAH). One can recognise a Helicase C-terminal domain in the interval 1852 to 2017 (GYEWITEYAG…GLVAQLYGPE (166 aa)). An N6-acetyllysine; by host modification is found at Lys-1893. The segment at 1950–1972 (NPSPITSASAAQRRGRVGRNPNQ) is disordered. The regulates the ATPase activity of NS3 helicase stretch occupies residues 2168–2172 (EELPD). A helical transmembrane segment spans residues 2174 to 2194 (LETITLIVAITVMTGGFFLLM). Topologically, residues 2195-2199 (MQRKG) are lumenal. Positions 2200–2220 (IGKMGLGALVLTLATFFLWAA) form an intramembrane region, helical. A topological domain (lumenal) is located at residue Glu-2221. A helical transmembrane segment spans residues 2222–2242 (VPGTKIAGTLLIALLLMVVLI). Topologically, residues 2243–2257 (PEPEKQRSQTDNQLA) are cytoplasmic. A helical transmembrane segment spans residues 2258–2278 (VFLICVLTVVGVVAANEYGML). Residues 2279–2311 (EKTKADLKSMFGGKTQASGLTGLPSMALDLRPA) lie on the Lumenal side of the membrane. Residues 2312–2332 (TAWALYGGSTVVLTPLLKHLI) constitute an intramembrane region (helical). Residues 2333–2368 (TSEYVTTSLASINSQAGSLFVLPRGVPFTDLDLTVG) lie on the Lumenal side of the membrane. The helical transmembrane segment at 2369–2389 (LVFLGCWGQITLTTFLTAMVL) threads the bilayer. At 2390 to 2444 (ATLHYGYMLPGWQAEALRAAQRRTAAGIMKNAVVDGMVATDVPELERTTPLMQKK) the chain is on the cytoplasmic side. The helical transmembrane segment at 2445–2465 (VGQVLLIGVSVAAFLVNPNVT) threads the bilayer. Residues 2466 to 2469 (TVRE) are Lumenal-facing. Residues 2470–2490 (AGVLVTAATLTLWDNGASAVW) form a helical membrane-spanning segment. At 2491-3432 (NSTTATGLCH…DVLIQEDRVI (942 aa)) the chain is on the cytoplasmic side. The mRNA cap 0-1 NS5-type MT domain maps to 2528–2793 (GRPGGRTLGE…DVNLGSGTRA (266 aa)). S-adenosyl-L-methionine is bound at residue Ser-2583. Residue Ser-2583 is modified to Phosphoserine. Lys-2588 functions as the For 2'-O-MTase activity in the catalytic mechanism. Gly-2613, Trp-2614, Thr-2631, Lys-2632, Asp-2658, and Val-2659 together coordinate S-adenosyl-L-methionine. The For 2'-O-MTase activity role is filled by Asp-2673. Ile-2674 contacts S-adenosyl-L-methionine. Residues Lys-2709 and Glu-2745 each act as for 2'-O-MTase activity in the active site. Tyr-2747 provides a ligand contact to S-adenosyl-L-methionine. 4 residues coordinate Zn(2+): Glu-2967, His-2971, Cys-2976, and Cys-2979. Residues 3057–3209 (GKMYADDTAG…KPLDDRFATA (153 aa)) enclose the RdRp catalytic domain. The Zn(2+) site is built by His-3244, Cys-3260, and Cys-3379.

It in the N-terminal section; belongs to the class I-like SAM-binding methyltransferase superfamily. mRNA cap 0-1 NS5-type methyltransferase family. Homodimer. Interacts (via N-terminus) with host EXOC1 (via C-terminus); this interaction results in EXOC1 degradation through the proteasome degradation pathway. In terms of assembly, forms heterodimers with envelope protein E in the endoplasmic reticulum and Golgi. As to quaternary structure, homodimer; in the endoplasmic reticulum and Golgi. Interacts with protein prM. Interacts with non-structural protein 1. Interacts with host HSPA5. Homodimer; Homohexamer when secreted. Interacts with envelope protein E. NS1 interacts with NS4B. Interacts with host complement protein CFH; this interaction leads to the degradation of C3. In terms of assembly, interacts (via N-terminus) with serine protease NS3. As to quaternary structure, forms a heterodimer with serine protease NS3. May form homooligomers. Forms a heterodimer with NS2B. Interacts with non-structural protein 2A (via N-terminus). Interacts with NS4B. Interacts with unphosphorylated RNA-directed RNA polymerase NS5; this interaction stimulates RNA-directed RNA polymerase NS5 guanylyltransferase activity. Interacts with host ILF2. In terms of assembly, interacts with serine protease NS3. As to quaternary structure, homodimer. Interacts with host STAT2; this interaction inhibits the phosphorylation of the latter, and, when all viral proteins are present (polyprotein), targets STAT2 for degradation. Interacts with serine protease NS3. Mn(2+) is required as a cofactor. Mg(2+) serves as cofactor. Post-translationally, specific enzymatic cleavages in vivo yield mature proteins. Cleavages in the lumen of endoplasmic reticulum are performed by host signal peptidase, whereas cleavages in the cytoplasmic side are performed by serine protease NS3. Signal cleavage at the 2K-4B site requires a prior NS3 protease-mediated cleavage at the 4A-2K site. Cleaved in post-Golgi vesicles by a host furin, releasing the mature small envelope protein M, and peptide pr. This cleavage is incomplete as up to 30% of viral particles still carry uncleaved prM. In terms of processing, N-glycosylated. Post-translationally, N-glycosylated. The excreted form is glycosylated and this is required for efficient secretion of the protein from infected cells. Acetylated by host KAT5. Acetylation modulates NS3 RNA-binding and unwinding activities and plays an important positive role for viral replication. In terms of processing, phosphorylated on serines residues. This phosphorylation may trigger NS5 nuclear localization.

The protein localises to the virion. It is found in the host nucleus. The protein resides in the host cytoplasm. It localises to the host perinuclear region. Its subcellular location is the secreted. The protein localises to the virion membrane. It is found in the host endoplasmic reticulum membrane. The protein resides in the host cell surface. The enzyme catalyses Selective hydrolysis of -Xaa-Xaa-|-Yaa- bonds in which each of the Xaa can be either Arg or Lys and Yaa can be either Ser or Ala.. It carries out the reaction RNA(n) + a ribonucleoside 5'-triphosphate = RNA(n+1) + diphosphate. It catalyses the reaction a ribonucleoside 5'-triphosphate + H2O = a ribonucleoside 5'-diphosphate + phosphate + H(+). The catalysed reaction is ATP + H2O = ADP + phosphate + H(+). The enzyme catalyses a 5'-end (5'-triphosphoguanosine)-ribonucleoside in mRNA + S-adenosyl-L-methionine = a 5'-end (N(7)-methyl 5'-triphosphoguanosine)-ribonucleoside in mRNA + S-adenosyl-L-homocysteine. It carries out the reaction a 5'-end (N(7)-methyl 5'-triphosphoguanosine)-ribonucleoside in mRNA + S-adenosyl-L-methionine = a 5'-end (N(7)-methyl 5'-triphosphoguanosine)-(2'-O-methyl-ribonucleoside) in mRNA + S-adenosyl-L-homocysteine + H(+). Functionally, plays a role in virus budding by binding to the cell membrane and gathering the viral RNA into a nucleocapsid that forms the core of a mature virus particle. During virus entry, may induce genome penetration into the host cytoplasm after hemifusion induced by the surface proteins. Can migrate to the cell nucleus where it modulates host functions. Overcomes the anti-viral effects of host EXOC1 by sequestering and degrading the latter through the proteasome degradation pathway. Inhibits RNA silencing by interfering with host Dicer. Its function is as follows. Prevents premature fusion activity of envelope proteins in trans-Golgi by binding to envelope protein E at pH6.0. After virion release in extracellular space, gets dissociated from E dimers. In terms of biological role, acts as a chaperone for envelope protein E during intracellular virion assembly by masking and inactivating envelope protein E fusion peptide. prM is the only viral peptide matured by host furin in the trans-Golgi network probably to avoid catastrophic activation of the viral fusion activity in acidic Golgi compartment prior to virion release. prM-E cleavage is inefficient, and many virions are only partially matured. These uncleaved prM would play a role in immune evasion. Functionally, may play a role in virus budding. Exerts cytotoxic effects by activating a mitochondrial apoptotic pathway through M ectodomain. May display a viroporin activity. Binds to host cell surface receptor and mediates fusion between viral and cellular membranes. Efficient virus attachment to cell is, at least in part, mediated by host HSPA5. Envelope protein is synthesized in the endoplasmic reticulum in the form of heterodimer with protein prM. They play a role in virion budding in the ER, and the newly formed immature particle is covered with 60 spikes composed of heterodimer between precursor prM and envelope protein E. The virion is transported to the Golgi apparatus where the low pH causes dissociation of PrM-E heterodimers and formation of E homodimers. prM-E cleavage is inefficient, and many virions are only partially matured. These uncleaved prM would play a role in immune evasion. Its function is as follows. Involved in immune evasion, pathogenesis and viral replication. Once cleaved off the polyprotein, is targeted to three destinations: the viral replication cycle, the plasma membrane and the extracellular compartment. Essential for viral replication. Required for formation of the replication complex and recruitment of other non-structural proteins to the ER-derived membrane structures. Excreted as a hexameric lipoparticle that plays a role against host immune response. Antagonizing the complement function. Binds to the host macrophages and dendritic cells. Inhibits signal transduction originating from Toll-like receptor 3 (TLR3). In terms of biological role, component of the viral RNA replication complex that functions in virion assembly and antagonizes the host alpha/beta interferon antiviral response. Functionally, required cofactor for the serine protease function of NS3. May have membrane-destabilizing activity and form viroporins. Displays three enzymatic activities: serine protease, NTPase and RNA helicase. NS3 serine protease, in association with NS2B, performs its autocleavage and cleaves the polyprotein at dibasic sites in the cytoplasm: C-prM, NS2A-NS2B, NS2B-NS3, NS3-NS4A, NS4A-2K and NS4B-NS5. NS3 RNA helicase binds RNA and unwinds dsRNA in the 3' to 5' direction. Its function is as follows. Regulates the ATPase activity of the NS3 helicase activity. NS4A allows NS3 helicase to conserve energy during unwinding. In terms of biological role, functions as a signal peptide for NS4B and is required for the interferon antagonism activity of the latter. Functionally, induces the formation of ER-derived membrane vesicles where the viral replication takes place. Inhibits interferon (IFN)-induced host STAT1 phosphorylation and nuclear translocation, thereby preventing the establishment of cellular antiviral state by blocking the IFN-alpha/beta pathway. Inhibits STAT2 translocation in the nucleus after IFN-alpha treatment. Replicates the viral (+) and (-) RNA genome. Performs the capping of genomes in the cytoplasm. NS5 methylates viral RNA cap at guanine N-7 and ribose 2'-O positions. Besides its role in RNA genome replication, also prevents the establishment of cellular antiviral state by blocking the interferon-alpha/beta (IFN-alpha/beta) signaling pathway. Inhibits host TYK2 and STAT2 phosphorylation, thereby preventing activation of JAK-STAT signaling pathway. The chain is Genome polyprotein from Ardeidae (herons).